We begin with the raw amino-acid sequence, 449 residues long: Type 3 secretion system ATPase (449 aa).

178–183 lines the ATP pocket; sequence GCGKTT.

Belongs to the ATPase alpha/beta chains family. T3SS ATPase subfamily. In terms of assembly, the core secretion machinery of the T3SS is composed of approximately 20 different proteins, including cytoplasmic components, a base, an export apparatus and a needle. This subunit is part of the cytosolic complex. Forms homododecamers. Comprises two hexameric rings that are probably stacked face-to-face by the association of their C-terminal domains. Also present as monomer and homohexamer in solution.

The protein resides in the cytoplasm. The catalysed reaction is ATP + H2O + cellular proteinSide 1 = ADP + phosphate + cellular proteinSide 2.. Its activity is regulated as follows. Oligomerization increases ATPase activity. Its function is as follows. ATPase component of the type III secretion system (T3SS), also called injectisome, which is used to inject bacterial effector proteins into eukaryotic host cells. Acts as a molecular motor to provide the energy that is required for the export of proteins. Required for type III secretion apparatus (T3SA) formation, proper protein secretion, host cell invasion and virulence. May play a critical role in T3SS substrate recognition, disassembly of the effector/chaperone complex and unfolding of the effector in an ATP-dependent manner prior to secretion. This chain is Type 3 secretion system ATPase, found in Pseudomonas savastanoi pv. phaseolicola (Pseudomonas syringae pv. phaseolicola).